The following is a 2073-amino-acid chain: Dedicator of cytokinesis protein 11 (2073 aa).

Serine 12 is modified (phosphoserine). Threonine 16 bears the Phosphothreonine mark. Residues serine 23 and serine 161 each carry the phosphoserine modification. One can recognise a PH domain in the interval 165 to 272 (GVIKQGWLHK…WLIMLKKIIQ (108 aa)). Phosphotyrosine is present on tyrosine 248. Phosphoserine is present on residues serine 306 and serine 445. The region spanning 640-818 (KNHLYVYPLQ…PLLKIKTHLE (179 aa)) is the C2 DOCK-type domain. The disordered stretch occupies residues 1227–1267 (QNGHGIKREDSRGSLIPEGATGFPDPGSTSENTRQSSSRSS). Phosphoserine is present on residues serine 1237 and serine 1240. Over residues 1254–1267 (STSENTRQSSSRSS) the composition is skewed to low complexity. The 428-residue stretch at 1609-2036 (KSYASTPELR…LSDIIHEQIL (428 aa)) folds into the DOCKER domain.

The protein belongs to the DOCK family. Interacts with CDC42. In terms of tissue distribution, expressed in spleen, thymus, mesenteric lymph nodes (MLN), bone marrow and peripheral blood lymphocytes. Enriched in B-cells from germinal centers. Expressed in B-, T- and dendritic cells as well as Purkinje cells.

Functionally, guanine nucleotide-exchange factor (GEF) that activates CDC42 by exchanging bound GDP for free GTP. Required for marginal zone (MZ) B-cell development, is associated with early bone marrow B-cell development, MZ B-cell formation, MZ B-cell number and marginal metallophilic macrophages morphology. Facilitates filopodia formation through the activation of CDC42. This chain is Dedicator of cytokinesis protein 11, found in Mus musculus (Mouse).